The primary structure comprises 186 residues: MSRRNPCKYEIRGHCLNGKKCHFSHNYFEWPPHALLVRQNFMLNKILKSMDRNNDTLSEISGAAELDRTEEYALGVIGVLESYLSSINNITKQSACVAMSKLLAEINNDDIKRLRNKEVPTSPKIRIYNTVISYIDSNKRNTKQTIHLLKRLPADVLKKTIKNTIDIHNEINGNNQGDINVDEQNE.

The segment at 1-28 (MSRRNPCKYEIRGHCLNGKKCHFSHNYF) adopts a C3H1-type zinc-finger fold. Residues 32 to 49 (PHALLVRQNFMLNKILKS) form an oligomerization region. Ser-58 and Ser-61 each carry phosphoserine; by host. Positions 76–171 (VIGVLESYLS…KNTIDIHNEI (96 aa)) are globular core. Positions 126–163 (RIYNTVISYIDSNKRNTKQTIHLLKRLPADVLKKTIKN) are binding to the phosphoprotein.

The protein belongs to the pneumoviridae M2-1 protein family. As to quaternary structure, homotetramer. The homotetramer interacts with RNA. Interacts with the phosphoprotein (P); this interaction is required for protein M2-1 function, localization in host inclusion bodies. Formation of a complex host PP1/M2-1/P allows P to target host PP1 phosphatase to the M2-1 substrate. Interacts with the nucleoprotein (N). Interacts with the matrix protein (M); this interaction directs M localization to cytoplasmic inclusions comprising viral proteins L, N, P, and M2-1 and mediates M association with the nucleocapsid. Interacts with host PABPC1 (via C-terminus). In terms of processing, phosphorylated by host in infected cells. Only dephosphorylated M2-1 is competent for viral mRNA binding. Cyclic turnover of phosphorylation-dephosphorylation of M2-1 is required for efficient viral transcription.

Its subcellular location is the virion. The protein localises to the host cytoplasm. It localises to the host nucleus. Functionally, acts as a tetrameric transcription processivity factor that binds in a competitive manner to RNA and the phosphoprotein (P) to prevent premature termination during transcription. Transcription anti-terminator that enhances readthrough of intergenic junctions during viral transcription. Preferentially binds to poly(A)-rich sequences. Plays a role in the association of the matrix protein with the nucleocapsid, which initiates assembly and budding. The polypeptide is Protein M2-1 (M2-1) (Bos taurus (Bovine)).